The chain runs to 147 residues: Peptide methionine sulfoxide reductase MsrB (147 aa).

Residues 1-11 (MPKIVKKEPKF) show a composition bias toward basic and acidic residues. Residues 1–25 (MPKIVKKEPKFVEQSGKKVTKSDEQ) form a disordered region. A MsrB domain is found at 23 to 145 (DEQWREQLSD…NSVSLIFNKS (123 aa)). Zn(2+) is bound by residues Cys-62, Cys-65, Cys-111, and Cys-114. Catalysis depends on Cys-134, which acts as the Nucleophile.

This sequence belongs to the MsrB Met sulfoxide reductase family. Zn(2+) serves as cofactor.

The enzyme catalyses L-methionyl-[protein] + [thioredoxin]-disulfide + H2O = L-methionyl-(R)-S-oxide-[protein] + [thioredoxin]-dithiol. The polypeptide is Peptide methionine sulfoxide reductase MsrB (Vibrio parahaemolyticus serotype O3:K6 (strain RIMD 2210633)).